Consider the following 522-residue polypeptide: 2-isopropylmalate synthase (522 aa).

The region spanning 5-267 (VIIFDTTLRD…ETGINAKEIH (263 aa)) is the Pyruvate carboxyltransferase domain. Mn(2+) contacts are provided by aspartate 14, histidine 202, histidine 204, and asparagine 238. The regulatory domain stretch occupies residues 392 to 522 (QLQQLVVQSD…MQKNRELGGV (131 aa)).

It belongs to the alpha-IPM synthase/homocitrate synthase family. LeuA type 1 subfamily. As to quaternary structure, homodimer. The cofactor is Mn(2+).

The protein resides in the cytoplasm. The catalysed reaction is 3-methyl-2-oxobutanoate + acetyl-CoA + H2O = (2S)-2-isopropylmalate + CoA + H(+). Its pathway is amino-acid biosynthesis; L-leucine biosynthesis; L-leucine from 3-methyl-2-oxobutanoate: step 1/4. In terms of biological role, catalyzes the condensation of the acetyl group of acetyl-CoA with 3-methyl-2-oxobutanoate (2-ketoisovalerate) to form 3-carboxy-3-hydroxy-4-methylpentanoate (2-isopropylmalate). In Shewanella baltica (strain OS155 / ATCC BAA-1091), this protein is 2-isopropylmalate synthase.